The chain runs to 87 residues: Polyketide-8 synthase acyl carrier protein 2 (87 aa).

Residues 8–83 (ALDKEQLREL…GTYELLTSKL (76 aa)) enclose the Carrier domain. The residue at position 43 (serine 43) is an O-(pantetheine 4'-phosphoryl)serine.

In terms of processing, 4'-phosphopantetheine is transferred from CoA to a specific serine of the apo-ACP-like protein.

In terms of biological role, acyl carrier protein. In Streptomyces avermitilis (strain ATCC 31267 / DSM 46492 / JCM 5070 / NBRC 14893 / NCIMB 12804 / NRRL 8165 / MA-4680), this protein is Polyketide-8 synthase acyl carrier protein 2.